We begin with the raw amino-acid sequence, 754 residues long: Putative sulfate transporter YPR003C (754 aa).

The segment at 1-91 (MTSNNSLLGR…NTSNTNNNDS (91 aa)) is disordered. At 1–118 (MTSNNSLLGR…SWLPEYTFNK (118 aa)) the chain is on the cytoplasmic side. Residues 25–45 (RSVDQRDTFSDNFDYDKDSSN) are compositionally biased toward basic and acidic residues. A compositionally biased stretch (low complexity) spans 65 to 89 (NSRSGCTNNTNNTNNTSNTSNTNNN). The chain crosses the membrane as a helical span at residues 119 to 139 (LWGDVIAGISVASFQIPLALS). Over 140-146 (YTTSIAH) the chain is Lumenal. The helical transmembrane segment at 147 to 167 (VPPLCGLYSLAISPFVYGILG) threads the bilayer. The Cytoplasmic portion of the chain corresponds to 168 to 172 (SVPQM). A helical membrane pass occupies residues 173–193 (IVGPESAISLVVGQAVESITL). Over 194–199 (HKENVS) the chain is Lumenal. A helical membrane pass occupies residues 200–220 (LIDISTVITFVSGTILLFSGI). Over 221–232 (SRFGFLGNVLSK) the chain is Cytoplasmic. The chain crosses the membrane as a helical span at residues 233–253 (ALLRGFISSVGLVMIINSLIS). Over 254-282 (ELKLDKFLVSLPQHYHTPFEKILFLIDYA) the chain is Lumenal. Residues 283 to 303 (PAQYHIPTAIFSGCCLIVLFL) traverse the membrane as a helical segment. Residues 304 to 317 (TRLLKRKLMKYHKS) are Cytoplasmic-facing. A helical transmembrane segment spans residues 318–338 (AIFFPDILLVVIVTILISMKF). Residues 339 to 370 (NLKHRYGISIIGDFSMDNFDELKNPLTRPRRK) are Lumenal-facing. A helical transmembrane segment spans residues 371–391 (LIPDLFSASLIVAMLGFFEST). Residues 392-410 (TASKSLGTTYNLTVSSNRE) lie on the Cytoplasmic side of the membrane. The helical transmembrane segment at 411 to 431 (LVALGFMNIVISLFGALPAFG) threads the bilayer. The Lumenal segment spans residues 432–450 (GYGRSKINALSGAQSVMSG). Residues 451 to 471 (VFMGVITLITMNLLLQFVHYI) traverse the membrane as a helical segment. The Cytoplasmic segment spans residues 472-474 (PNC). A helical transmembrane segment spans residues 475–495 (VLSVITTIIGISLLEEVPGDI). Topologically, residues 496–517 (KFHLRCGGFSELFVFAVTFCTT) are lumenal. A helical transmembrane segment spans residues 518–538 (IFYSIEAGICIGCVYSIINII). The Cytoplasmic portion of the chain corresponds to 539 to 754 (KHSAKSRIQI…SNTLFNSSLV (216 aa)). Residues 574-725 (DVEGTEEIEG…DSIDAALYEI (152 aa)) enclose the STAS domain.

Belongs to the SLC26A/SulP transporter (TC 2.A.53) family.

It is found in the endoplasmic reticulum membrane. Functionally, possible sulfate transporter. The chain is Putative sulfate transporter YPR003C from Saccharomyces cerevisiae (strain ATCC 204508 / S288c) (Baker's yeast).